The following is a 395-amino-acid chain: Multidrug resistance protein MdtL (395 aa).

12 helical membrane passes run F4–V24, I42–A62, P69–S89, L93–F113, L131–M151, S158–L178, V217–F237, A247–F267, T271–H291, V295–M315, V328–I350, and A355–V377.

It belongs to the major facilitator superfamily. DHA1 family. MdtL (TC 2.A.1.2.22) subfamily.

It is found in the cell inner membrane. In Salmonella schwarzengrund (strain CVM19633), this protein is Multidrug resistance protein MdtL.